The primary structure comprises 382 residues: D-galactonate dehydratase (382 aa).

Mg(2+) is bound at residue Asp-183. The active-site Proton donor is His-185. Residues Glu-209 and Glu-235 each coordinate Mg(2+). Residue His-285 is the Proton acceptor of the active site.

Belongs to the mandelate racemase/muconate lactonizing enzyme family. GalD subfamily. Mg(2+) serves as cofactor.

The catalysed reaction is D-galactonate = 2-dehydro-3-deoxy-D-galactonate + H2O. It functions in the pathway carbohydrate acid metabolism; D-galactonate degradation; D-glyceraldehyde 3-phosphate and pyruvate from D-galactonate: step 1/3. Its function is as follows. Catalyzes the dehydration of D-galactonate to 2-keto-3-deoxy-D-galactonate. The chain is D-galactonate dehydratase from Salmonella gallinarum (strain 287/91 / NCTC 13346).